A 619-amino-acid chain; its full sequence is DNA polymerase II small subunit (619 aa).

A disordered region spans residues 78–122; sequence EEAEKTVESQETRASELEEGGVSQVSSGELQELKEESPEISTTEE. The segment covering 79 to 93 has biased composition (basic and acidic residues); sequence EAEKTVESQETRASE.

This sequence belongs to the DNA polymerase delta/II small subunit family. In terms of assembly, heterodimer of a large subunit and a small subunit.

It carries out the reaction DNA(n) + a 2'-deoxyribonucleoside 5'-triphosphate = DNA(n+1) + diphosphate. It catalyses the reaction Exonucleolytic cleavage in the 3'- to 5'-direction to yield nucleoside 5'-phosphates.. Possesses two activities: a DNA synthesis (polymerase) and an exonucleolytic activity that degrades single-stranded DNA in the 3' to 5' direction. Has a template-primer preference which is characteristic of a replicative DNA polymerase. The chain is DNA polymerase II small subunit (polB) from Pyrococcus abyssi (strain GE5 / Orsay).